The primary structure comprises 348 residues: Dihydroorotase (348 aa).

2 residues coordinate Zn(2+): histidine 13 and histidine 15. Substrate is bound by residues 15 to 17 (HLR) and asparagine 41. Residues lysine 99, histidine 136, and histidine 174 each contribute to the Zn(2+) site. Lysine 99 carries the N6-carboxylysine modification. Histidine 136 is a substrate binding site. Leucine 219 lines the substrate pocket. Position 247 (aspartate 247) interacts with Zn(2+). Aspartate 247 is a catalytic residue. The substrate site is built by histidine 251 and alanine 263.

The protein belongs to the metallo-dependent hydrolases superfamily. DHOase family. Class II DHOase subfamily. As to quaternary structure, homodimer. Requires Zn(2+) as cofactor.

The enzyme catalyses (S)-dihydroorotate + H2O = N-carbamoyl-L-aspartate + H(+). It functions in the pathway pyrimidine metabolism; UMP biosynthesis via de novo pathway; (S)-dihydroorotate from bicarbonate: step 3/3. Catalyzes the reversible cyclization of carbamoyl aspartate to dihydroorotate. This is Dihydroorotase from Coxiella burnetii (strain RSA 331 / Henzerling II).